The primary structure comprises 231 residues: Large ribosomal subunit protein uL1 (231 aa).

The protein belongs to the universal ribosomal protein uL1 family. Part of the 50S ribosomal subunit.

Functionally, binds directly to 23S rRNA. The L1 stalk is quite mobile in the ribosome, and is involved in E site tRNA release. Protein L1 is also a translational repressor protein, it controls the translation of the L11 operon by binding to its mRNA. In Buchnera aphidicola subsp. Acyrthosiphon pisum (strain 5A), this protein is Large ribosomal subunit protein uL1.